The following is a 226-amino-acid chain: MTHPQQPHGPLRSFGRLKSRPVKPRQQALLDTLLPQIAVPTAPFQPRDLMPEAQEVWLEIGFGGGEHMAAQAGKRPDVLMIGAEPFVNGVASAVRHVEEQALKNVRIHEGDARDVVGWLPDASIDRLFIMFPDPWHKARHNKRRLVQPAFVAELARVLKPGAGFRFATDWADYAQWTVERVLADPAFRFADAEAVRNAPPADHVTTRYEEKKLGDCAPVFLDFVRI.

The tract at residues 1–21 (MTHPQQPHGPLRSFGRLKSRP) is disordered. S-adenosyl-L-methionine contacts are provided by E59, E84, D111, and D133. D133 is an active-site residue. K137 contacts substrate. The tract at residues 139–144 (RHNKRR) is interaction with RNA. Residues D169 and 206-209 (TRYE) each bind substrate.

Belongs to the class I-like SAM-binding methyltransferase superfamily. TrmB family.

The enzyme catalyses guanosine(46) in tRNA + S-adenosyl-L-methionine = N(7)-methylguanosine(46) in tRNA + S-adenosyl-L-homocysteine. It participates in tRNA modification; N(7)-methylguanine-tRNA biosynthesis. In terms of biological role, catalyzes the formation of N(7)-methylguanine at position 46 (m7G46) in tRNA. The polypeptide is tRNA (guanine-N(7)-)-methyltransferase (Caulobacter sp. (strain K31)).